The following is a 348-amino-acid chain: MSDRLTLLRPDDWHIHLRDGAVLPHTVGDVARTFARAIIMPNLVPPVRNADEAGAYRERILNARPAGSRFEPLMVLYLTDRTSPEDIRAAKASGIVYAAKLYPAGATTNSDSGVTSIDNIFPAIEALAEVGMPLLVHGEVTRSEIDVFDREKRFIDEHMRRLVERFPTLKVVFEHITTADAAQFVTEAPANVGATITAQHLLYNRNHMLVGGIRPHFYCLPILKRNTHQVALLDAATSGNPKFFLGTDSAPHARHAKEAACGCAGCYTAYAAIEMYAEAFEQRNALDKLEGFASLHGPAFYGLPANTDTITLVREEWTAPDSLPFGEQTVIPLRAGEKLRWRLLEDNA.

Zn(2+) is bound by residues His14 and His16. Substrate contacts are provided by residues 16-18 (HLR) and Asn42. Residues Lys100, His137, and His175 each coordinate Zn(2+). Lys100 carries the post-translational modification N6-carboxylysine. His137 contributes to the substrate binding site. Leu220 provides a ligand contact to substrate. Residue Asp248 coordinates Zn(2+). The active site involves Asp248. Substrate is bound by residues His252 and Ala264.

It belongs to the metallo-dependent hydrolases superfamily. DHOase family. Class II DHOase subfamily. In terms of assembly, homodimer. It depends on Zn(2+) as a cofactor.

The catalysed reaction is (S)-dihydroorotate + H2O = N-carbamoyl-L-aspartate + H(+). It functions in the pathway pyrimidine metabolism; UMP biosynthesis via de novo pathway; (S)-dihydroorotate from bicarbonate: step 3/3. Catalyzes the reversible cyclization of carbamoyl aspartate to dihydroorotate. The sequence is that of Dihydroorotase from Pseudomonas putida (strain W619).